A 300-amino-acid chain; its full sequence is tRNA dimethylallyltransferase (300 aa).

9 to 16 (GPTASGKT) contributes to the ATP binding site. 11 to 16 (TASGKT) contributes to the substrate binding site. Residues 34–37 (DSQQ) are interaction with substrate tRNA.

Belongs to the IPP transferase family. In terms of assembly, monomer. The cofactor is Mg(2+).

It carries out the reaction adenosine(37) in tRNA + dimethylallyl diphosphate = N(6)-dimethylallyladenosine(37) in tRNA + diphosphate. Its function is as follows. Catalyzes the transfer of a dimethylallyl group onto the adenine at position 37 in tRNAs that read codons beginning with uridine, leading to the formation of N6-(dimethylallyl)adenosine (i(6)A). This is tRNA dimethylallyltransferase from Anaeromyxobacter sp. (strain Fw109-5).